We begin with the raw amino-acid sequence, 942 residues long: DDB1- and CUL4-associated factor 5 (942 aa).

6 WD repeats span residues 51–91, 99–139, 140–180, 185–225, 277–317, and 331–370; these read GHFG…HSRV, EHHS…LDVF, AHED…HGEP, NYPS…SSLL, FNSC…EAGG, and GHRSIVNQVRFNPHTYMICSSGVEKIIKIWSPYKQPGCTG. Disordered regions lie at residues 449–478 and 490–509; these read GVSERSGYTDSESSASLPRSPPPTVDESAD and TTNTVASTPPTPTCEDAASR. Residues 454–465 show a composition bias toward polar residues; that stretch reads SGYTDSESSASL. Thr500 carries the post-translational modification Phosphothreonine. Phosphoserine is present on residues Ser531, Ser533, Ser626, Ser628, Ser645, Ser648, and Ser651. 3 disordered regions span residues 544–655, 676–824, and 889–942; these read TDLF…DIES, NNKD…EERS, and ACET…KLKT. Residues 625-641 show a composition bias toward low complexity; the sequence is LSSSPTSSPERSTSTLE. Basic and acidic residues-rich tracts occupy residues 690–701 and 728–738; these read DEGRAGTSHKDN and CSKDTFKEETP. A compositionally biased stretch (polar residues) spans 760 to 770; that stretch reads GTSQDTGNSGS. Phosphoserine is present on Ser794. Positions 801–815 are enriched in polar residues; sequence SGSTLNSGSGNCPRT.

In terms of assembly, interacts with DDB1, CUL4A or CUL4B. Interacts with L3MBTL3. Interacts with DNMT1. Interacts with E2F1. Interacts with SOX2. Ubiquitous.

It functions in the pathway protein modification; protein ubiquitination. Functionally, is a substrate receptor for the CUL4-DDB1 E3 ubiquitin-protein ligase complex (CRL4). The complex CRL4-DCAF5 is involved in the ubiquitination of a set of methylated non-histone proteins, including SOX2, DNMT1 and E2F1. This chain is DDB1- and CUL4-associated factor 5 (DCAF5), found in Homo sapiens (Human).